The following is a 416-amino-acid chain: Tiggy-winkle hedgehog protein (416 aa).

The first 26 residues, M1–A26, serve as a signal peptide directing secretion. A lipid anchor (N-palmitoyl cysteine) is attached at C27. Ca(2+)-binding residues include E92, E93, D98, T128, E129, D132, and D134. Zn(2+) is bound by residues H143, D150, and H185. G200 carries the Cholesterol glycine ester lipid modification.

Belongs to the hedgehog family. As to quaternary structure, multimer. Interacts with HHATL/GUP1 which negatively regulates HHAT-mediated palmitoylation of the TWHH N-terminus. Interacts with BOC and CDON. Interacts with HHIP. Interacts with DISP1 via its cholesterol anchor. Interacts with SCUBE2. Post-translationally, the C-terminal domain displays an autoproteolysis activity and a cholesterol transferase activity. Both activities result in the cleavage of the full-length protein into two parts (N-product and C-product) followed by the covalent attachment of a cholesterol moiety to the C-terminal of the newly generated N-product. Cholesterylation is required for the tiggy-winkle hedgehog protein N-product targeting to lipid rafts and multimerization. N-product is the active species in both local and long-range signaling, whereas the C-product is degraded in the endoplasmic reticulum. In terms of processing, N-palmitoylation by HHAT of N-product is required for tiggy-winkle hedgehog protein N-product multimerization and full activity. It is a prerequisite for the membrane-proximal positioning and the subsequent shedding of this N-terminal peptide. The lipidated N- and C-terminal peptides of N-product can be cleaved (shedding). The N-terminal palmitoylated peptide is cleaved at the Cardin-Weintraub (CW) motif site. The cleavage reduced the interactions with heparan sulfate. The cleavage is enhanced by SCUBE2. In terms of tissue distribution, expressed in the ventral midline of the neural tube and brain. In the developing brain, expression occurs in domains that include a discrete region in the floor of the diencephalon. Not detected in the notochord or developing fin bud.

It is found in the cell membrane. The protein localises to the endoplasmic reticulum membrane. Its subcellular location is the golgi apparatus membrane. Its function is as follows. The C-terminal part of the tiggy-winkle hedgehog protein precursor displays an autoproteolysis and a cholesterol transferase activity. Both activities result in the cleavage of the full-length protein into two parts (N-product and C-product) followed by the covalent attachment of a cholesterol moiety to the C-terminal of the newly generated N-product. Both activities occur in the endoplasmic reticulum. Once cleaved, the C-product is degraded in the endoplasmic reticulum. In terms of biological role, the dually lipidated tiggy-winkle hedgehog protein N-product is a morphogen which is essential for a variety of patterning events during development. Involved in dorso-ventral patterning of the brain and in early patterning of the developing eyes. Binds to the patched (PTCH1) receptor, which functions in association with smoothened (SMO), to activate the transcription of target genes. In Danio rerio (Zebrafish), this protein is Tiggy-winkle hedgehog protein (shhb).